The primary structure comprises 163 residues: tRNA-acetylating toxin 2 (163 aa).

9 residues coordinate acetyl-CoA: Leu-89, Val-91, His-96, Gly-97, Gln-98, Gly-99, Ala-101, Arg-102, and Glu-132. The active site involves Tyr-137. Arg-139 contacts acetyl-CoA.

The protein belongs to the acetyltransferase family. GNAT subfamily. In terms of assembly, homodimer (in absence of antitoxin). Forms a complex with cognate antitoxin TacA2. Forms a 4:2 antitoxin:toxin complex with cognate antitoxin TacA2.

The enzyme catalyses glycyl-tRNA(Gly) + acetyl-CoA = N-acetylglycyl-tRNA(Gly) + CoA + H(+). In terms of biological role, toxic component of a type II toxin-antitoxin (TA) system. Acetylates tRNA and inhibits translation. Acetylates exclusively Gly in situ. Overexpression during the lag phase of a tacA2-tacT2 deletion strain leads to very small increase in persister cells in the presence of cefotaxime but no detectable growth phenotype in absence of antibiotics. Compared to a protein with a single amino acid change (TacT2 from S.enterica NCTC 13349, Glu-29 is Lys in NCTC 13349) this protein binds tRNA very poorly and acetylates tRNA very poorly. Persister cell formation is neutralized by cognate antitoxin TacA2. Neutralized only by cognate antitoxin TacA2 (A8), but not by TacA1 or TacA3. Plays a role in persister cell formation. Functionally, the TacA2-TacT2 complex both represses and derepresses expression of its own operon. The chain is tRNA-acetylating toxin 2 from Salmonella typhimurium (strain 14028s / SGSC 2262).